The following is a 217-amino-acid chain: Large ribosomal subunit protein uL1 (217 aa).

The protein belongs to the universal ribosomal protein uL1 family. As to quaternary structure, part of the 50S ribosomal subunit.

Binds directly to 23S rRNA. Probably involved in E site tRNA release. In terms of biological role, protein L1 is also a translational repressor protein, it controls the translation of its operon by binding to its mRNA. In Hyperthermus butylicus (strain DSM 5456 / JCM 9403 / PLM1-5), this protein is Large ribosomal subunit protein uL1.